Here is a 499-residue protein sequence, read N- to C-terminus: MGSPLCVPIFLAVCILIQSSTHGQSLRPEPFGRRARVTATKKTLLETETRFLLFKDKANKGCQIRLHHADTLQECGFNSSLPLVMIVHGWSVDGLLESWIWQMVAALKSQPARPVNVGLVDWISLAHSHYAVAVRNARLVGQEVAALLQWLEESAPFSRSNVHLIGYSLGAHVAGFAGSYISGKHKIGRITGLDAAGPLFEGTSASDRLSPDDATFVDAIHTFTREHMGLSVGIKQPVGHYDFYPNGGSFQPGCHFLELYKHIAQHGLNALSQTIKCAHERSVHLFIDSLLHPSMQSTAYQCSDMDSFSQGLCLGCTKGRCNTLGYHIRQEPLSKGKRLFLVTQAQSPFRVYHYQFKIQFINQIEKPLEPTFTMSLLGTKEEMQKIPITLGEGITSNKTYSFLITLNLDIGELMVIKFKWENSAVWANVWNTVQTIIPWGIKPRNSGLILKTIRVKAGETQQRMTFCSENMDDLQLHPTQEKNFVRCEVNPKKLKLKIK.

A signal peptide spans 1 to 21 (MGSPLCVPIFLAVCILIQSST). A glycan (N-linked (GlcNAc...) asparagine) is linked at Asn-78. Ser-168 acts as the Nucleophile in catalysis. Asp-194 functions as the Charge relay system in the catalytic mechanism. Positions 254 to 277 (CHFLELYKHIAQHGLNALSQTIKC) are essential for determining substrate specificity. His-279 serves as the catalytic Charge relay system. A PLAT domain is found at 352–486 (YHYQFKIQFI…HPTQEKNFVR (135 aa)). Asn-397 carries an N-linked (GlcNAc...) asparagine glycan.

This sequence belongs to the AB hydrolase superfamily. Lipase family. In terms of assembly, homodimer.

Its subcellular location is the secreted. It carries out the reaction a triacylglycerol + H2O = a diacylglycerol + a fatty acid + H(+). It catalyses the reaction a 1-acyl-sn-glycero-3-phosphocholine + H2O = sn-glycerol 3-phosphocholine + a fatty acid + H(+). The catalysed reaction is a 1,2-diacyl-sn-glycero-3-phosphocholine + H2O = a 2-acyl-sn-glycero-3-phosphocholine + a fatty acid + H(+). The enzyme catalyses 1,2,3-tri-(9Z-octadecenoyl)-glycerol + H2O = di-(9Z)-octadecenoylglycerol + (9Z)-octadecenoate + H(+). It carries out the reaction 1,2-di-(9Z-octadecenoyl)-sn-glycero-3-phosphocholine + H2O = (9Z-octadecenoyl)-sn-glycero-3-phosphocholine + (9Z)-octadecenoate + H(+). It catalyses the reaction 1,2,3-tributanoylglycerol + H2O = dibutanoylglycerol + butanoate + H(+). The catalysed reaction is 1,2-dihexadecanoyl-sn-glycero-3-phosphocholine + H2O = hexadecanoyl-sn-glycero-3-phosphocholine + hexadecanoate + H(+). The enzyme catalyses 1,2-di-(9Z-octadecenoyl)-sn-glycerol + H2O = 2-(9Z-octadecenoyl)-glycerol + (9Z)-octadecenoate + H(+). It carries out the reaction 1,2,3-tri-(9Z-octadecenoyl)-glycerol + H2O = 2,3-di-(9Z)-octadecenoyl-sn-glycerol + (9Z)-octadecenoate + H(+). It catalyses the reaction 1-(9Z-octadecenoyl)-sn-glycero-3-phospho-L-serine + H2O = sn-glycero-3-phospho-L-serine + (9Z)-octadecenoate + H(+). The catalysed reaction is 1-hexadecanoyl-sn-glycero-3-phosphocholine + H2O = sn-glycerol 3-phosphocholine + hexadecanoate + H(+). The enzyme catalyses 1,3-di-(9Z-octadecenoyl)-glycerol + H2O = 3-(9Z-octadecenoyl)-sn-glycerol + (9Z)-octadecenoate + H(+). Functionally, catalyzes the hydrolysis of triglycerides and phospholipids present in circulating plasma lipoproteins, including chylomicrons, intermediate density lipoproteins (IDL), low density lipoproteins (LDL) of large size and high density lipoproteins (HDL), releasing free fatty acids (FFA) and smaller lipoprotein particles. Also exhibits lysophospholipase activity. Can hydrolyze both neutral lipid and phospholipid substrates but shows a greater binding affinity for neutral lipid substrates than phospholipid substrates. In native LDL, preferentially hydrolyzes the phosphatidylcholine species containing polyunsaturated fatty acids at sn-2 position. This Oryctolagus cuniculus (Rabbit) protein is Hepatic triacylglycerol lipase (LIPC).